The chain runs to 388 residues: 3-ketoacyl-CoA thiolase (388 aa).

The active-site Acyl-thioester intermediate is the Cys91. Active-site proton acceptor residues include His343 and Cys373.

Belongs to the thiolase-like superfamily. Thiolase family. Heterotetramer of two alpha chains (FadB) and two beta chains (FadA).

The protein resides in the cytoplasm. The catalysed reaction is an acyl-CoA + acetyl-CoA = a 3-oxoacyl-CoA + CoA. It participates in lipid metabolism; fatty acid beta-oxidation. In terms of biological role, catalyzes the final step of fatty acid oxidation in which acetyl-CoA is released and the CoA ester of a fatty acid two carbons shorter is formed. This Photorhabdus laumondii subsp. laumondii (strain DSM 15139 / CIP 105565 / TT01) (Photorhabdus luminescens subsp. laumondii) protein is 3-ketoacyl-CoA thiolase.